The chain runs to 99 residues: Aspartyl/glutamyl-tRNA(Asn/Gln) amidotransferase subunit C (99 aa).

Belongs to the GatC family. In terms of assembly, heterotrimer of A, B and C subunits.

It carries out the reaction L-glutamyl-tRNA(Gln) + L-glutamine + ATP + H2O = L-glutaminyl-tRNA(Gln) + L-glutamate + ADP + phosphate + H(+). The catalysed reaction is L-aspartyl-tRNA(Asn) + L-glutamine + ATP + H2O = L-asparaginyl-tRNA(Asn) + L-glutamate + ADP + phosphate + 2 H(+). In terms of biological role, allows the formation of correctly charged Asn-tRNA(Asn) or Gln-tRNA(Gln) through the transamidation of misacylated Asp-tRNA(Asn) or Glu-tRNA(Gln) in organisms which lack either or both of asparaginyl-tRNA or glutaminyl-tRNA synthetases. The reaction takes place in the presence of glutamine and ATP through an activated phospho-Asp-tRNA(Asn) or phospho-Glu-tRNA(Gln). The protein is Aspartyl/glutamyl-tRNA(Asn/Gln) amidotransferase subunit C of Paracidovorax citrulli (strain AAC00-1) (Acidovorax citrulli).